Consider the following 261-residue polypeptide: Na(+)-translocating NADH-quinone reductase subunit C (261 aa).

A helical transmembrane segment spans residues 12–32 (LGVVIGLSLVCSIIVSTAAVG). Threonine 229 is subject to FMN phosphoryl threonine.

Belongs to the NqrC family. In terms of assembly, composed of six subunits; NqrA, NqrB, NqrC, NqrD, NqrE and NqrF. The cofactor is FMN.

It is found in the cell inner membrane. The enzyme catalyses a ubiquinone + n Na(+)(in) + NADH + H(+) = a ubiquinol + n Na(+)(out) + NAD(+). Its function is as follows. NQR complex catalyzes the reduction of ubiquinone-1 to ubiquinol by two successive reactions, coupled with the transport of Na(+) ions from the cytoplasm to the periplasm. NqrA to NqrE are probably involved in the second step, the conversion of ubisemiquinone to ubiquinol. This is Na(+)-translocating NADH-quinone reductase subunit C from Vibrio parahaemolyticus serotype O3:K6 (strain RIMD 2210633).